Here is a 48-residue protein sequence, read N- to C-terminus: Glycine-rich RNA-binding protein 2 (48 aa).

In Populus euphratica (Euphrates poplar), this protein is Glycine-rich RNA-binding protein 2.